A 230-amino-acid polypeptide reads, in one-letter code: Cytochrome c oxidase subunit 2 (230 aa).

Topologically, residues 1 to 14 (MAYPLQLGFQDATS) are mitochondrial intermembrane. The helical transmembrane segment at 15–45 (PIMEELLHFHDHTLMIVFLISSLVLYIISTM) threads the bilayer. Residues 46–59 (LTTKLTHTNTMDAQ) are Mitochondrial matrix-facing. The chain crosses the membrane as a helical span at residues 60 to 87 (EVETIWTILPAIILILIALPSLRILYMM). The Mitochondrial intermembrane segment spans residues 88 to 230 (DEINNPNLTI…NWTSSMMSTS (143 aa)). Positions 161, 196, 198, 200, 204, and 207 each coordinate Cu cation. E198 contributes to the Mg(2+) binding site. Residue Y218 is modified to Phosphotyrosine.

Belongs to the cytochrome c oxidase subunit 2 family. As to quaternary structure, component of the cytochrome c oxidase (complex IV, CIV), a multisubunit enzyme composed of 14 subunits. The complex is composed of a catalytic core of 3 subunits MT-CO1, MT-CO2 and MT-CO3, encoded in the mitochondrial DNA, and 11 supernumerary subunits COX4I, COX5A, COX5B, COX6A, COX6B, COX6C, COX7A, COX7B, COX7C, COX8 and NDUFA4, which are encoded in the nuclear genome. The complex exists as a monomer or a dimer and forms supercomplexes (SCs) in the inner mitochondrial membrane with NADH-ubiquinone oxidoreductase (complex I, CI) and ubiquinol-cytochrome c oxidoreductase (cytochrome b-c1 complex, complex III, CIII), resulting in different assemblies (supercomplex SCI(1)III(2)IV(1) and megacomplex MCI(2)III(2)IV(2)). Found in a complex with TMEM177, COA6, COX18, COX20, SCO1 and SCO2. Interacts with TMEM177 in a COX20-dependent manner. Interacts with COX20. Interacts with COX16. Cu cation serves as cofactor.

The protein resides in the mitochondrion inner membrane. The catalysed reaction is 4 Fe(II)-[cytochrome c] + O2 + 8 H(+)(in) = 4 Fe(III)-[cytochrome c] + 2 H2O + 4 H(+)(out). Functionally, component of the cytochrome c oxidase, the last enzyme in the mitochondrial electron transport chain which drives oxidative phosphorylation. The respiratory chain contains 3 multisubunit complexes succinate dehydrogenase (complex II, CII), ubiquinol-cytochrome c oxidoreductase (cytochrome b-c1 complex, complex III, CIII) and cytochrome c oxidase (complex IV, CIV), that cooperate to transfer electrons derived from NADH and succinate to molecular oxygen, creating an electrochemical gradient over the inner membrane that drives transmembrane transport and the ATP synthase. Cytochrome c oxidase is the component of the respiratory chain that catalyzes the reduction of oxygen to water. Electrons originating from reduced cytochrome c in the intermembrane space (IMS) are transferred via the dinuclear copper A center (CU(A)) of subunit 2 and heme A of subunit 1 to the active site in subunit 1, a binuclear center (BNC) formed by heme A3 and copper B (CU(B)). The BNC reduces molecular oxygen to 2 water molecules using 4 electrons from cytochrome c in the IMS and 4 protons from the mitochondrial matrix. The chain is Cytochrome c oxidase subunit 2 (MT-CO2) from Ornithorhynchus anatinus (Duckbill platypus).